The chain runs to 180 residues: MASSVLSSAAVATRSNVAQANMVAPFTGLKSAASFPVSRKQNLDITSIASNGGRVQCMQVWPPINKKKYETLSYLPDLSVEQLLSEIEYLLKNGWVPCLEFETEHGFVYREHHKSPGYYDGRYWTMWKLPMFGCTDATQVLAEVEEAKKAYPQAWIRIIGFDNVRQVQCISFIAYKPEGY.

The N-terminal 56 residues, 1–56 (MASSVLSSAAVATRSNVAQANMVAPFTGLKSAASFPVSRKQNLDITSIASNGGRVQ), are a transit peptide targeting the chloroplast.

Belongs to the RuBisCO small chain family. As to quaternary structure, heterohexadecamer of 8 large and 8 small subunits. In terms of assembly, (Microbial infection) Binds to tobamovirus movement protein at the plasmodesmata (e.g. tomato mosaic virus MP AC P69513); this interaction seems required for viral systemic movement.

The protein localises to the plastid. It localises to the chloroplast. It is found in the cell junction. Its subcellular location is the plasmodesma. Its function is as follows. RuBisCO catalyzes two reactions: the carboxylation of D-ribulose 1,5-bisphosphate, the primary event in carbon dioxide fixation, as well as the oxidative fragmentation of the pentose substrate. Both reactions occur simultaneously and in competition at the same active site. Although the small subunit is not catalytic it is essential for maximal activity. Involved in antiviral defenses. Functionally, (Microbial infection) Required for tobamovirus movement (e.g. tobacco mosaic virus (TMV)). The sequence is that of Ribulose bisphosphate carboxylase small subunit, chloroplastic from Nicotiana benthamiana.